The primary structure comprises 539 residues: Eukaryotic translation initiation factor 3 subunit L (539 aa).

Residues 306 to 514 (TFSDILLYIQ…IHIADTKVSH (209 aa)) form the PCI domain.

Belongs to the eIF-3 subunit L family. As to quaternary structure, component of the eukaryotic translation initiation factor 3 (eIF-3) complex. The eIF-3 complex interacts with pix.

Its subcellular location is the cytoplasm. Its function is as follows. Component of the eukaryotic translation initiation factor 3 (eIF-3) complex, which is involved in protein synthesis of a specialized repertoire of mRNAs and, together with other initiation factors, stimulates binding of mRNA and methionyl-tRNAi to the 40S ribosome. The eIF-3 complex specifically targets and initiates translation of a subset of mRNAs involved in cell proliferation. The protein is Eukaryotic translation initiation factor 3 subunit L of Drosophila ananassae (Fruit fly).